Reading from the N-terminus, the 1215-residue chain is RNA-dependent RNA polymerase 1 (1215 aa).

It belongs to the RdRP family. In terms of assembly, cid12, hrr1 and rdp1 interact forming the RNA-directed RNA polymerase complex (RDRC). The RDRC complex interacts with the RITS complex via interaction between ago1 and hrr1. Clr4 has a role in mediating this interaction.

It is found in the cytoplasm. The protein localises to the nucleus. The protein resides in the chromosome. Its subcellular location is the telomere. It localises to the centromere. It catalyses the reaction RNA(n) + a ribonucleoside 5'-triphosphate = RNA(n+1) + diphosphate. Its function is as follows. Has a role in the RNA interference (RNAi) pathway which is important for heterochromatin formation, accurate chromosome segregation, centromere cohesion and telomere function during mitosis and meiosis. Required for both post-transcriptional and transcriptional gene silencing. Required for silencing at the centromeres and for initiation of transcriptionally silent heterochromatin at the mating type locus. Promotes histone H3 'Lys-10' methylation necessary for centromere function. Required for recruitment of swi6 and cohesin to an ectopic dg repeat. A member of the RNA-directed RNA polymerase complex (RDRC) which is involved in the generation of small interfering RNAs (siRNAs) and mediates their association with the RNA-induced transcriptional silencing (RITS) complex. RITS acts as a priming complex for dsRNA synthesis at the site of non-coding centromeric RNA. Its RNA-dependent RNA polymerase activity is critical in siRNA production necessary for heterochromatin formation. The sequence is that of RNA-dependent RNA polymerase 1 (rdp1) from Schizosaccharomyces pombe (strain 972 / ATCC 24843) (Fission yeast).